The sequence spans 141 residues: Ribosome-binding factor A (141 aa).

This sequence belongs to the RbfA family. In terms of assembly, monomer. Binds 30S ribosomal subunits, but not 50S ribosomal subunits or 70S ribosomes.

Its subcellular location is the cytoplasm. One of several proteins that assist in the late maturation steps of the functional core of the 30S ribosomal subunit. Associates with free 30S ribosomal subunits (but not with 30S subunits that are part of 70S ribosomes or polysomes). Required for efficient processing of 16S rRNA. May interact with the 5'-terminal helix region of 16S rRNA. The protein is Ribosome-binding factor A of Afipia carboxidovorans (strain ATCC 49405 / DSM 1227 / KCTC 32145 / OM5) (Oligotropha carboxidovorans).